The following is a 910-amino-acid chain: Eukaryotic translation initiation factor 3 subunit C (910 aa).

Positions 1 to 21 are disordered; it reads MSRFFANGSESESESSEEEIQ. Acidic residues predominate over residues 11-20; the sequence is SESESSEEEI. Phosphoserine occurs at positions 34, 165, 176, and 185. The tract at residues 157–281 is disordered; the sequence is FREAPDQESE…KRAEDDEDGE (125 aa). Over residues 162–186 the composition is skewed to acidic residues; sequence DQESEAEDEVVALESDGGDAGDDSD. The segment covering 193-207 has biased composition (low complexity); sequence EAAPKAVKSAPAKAA. The segment covering 209-235 has biased composition (acidic residues); sequence ADDDDSDDSIDWDSDSESETESSDDEN. The segment covering 240-268 has biased composition (basic and acidic residues); sequence MRERFLKRTTEKEEKDDDKRKDKRKEQKT. One can recognise a PCI domain in the interval 639–815; that stretch reads FHMHINLELL…ETVGMHRSEP (177 aa). Residues 847 to 910 are disordered; it reads FFQRGNMGNR…QQQVQTIDEE (64 aa). Over residues 862–874 the composition is skewed to low complexity; sequence NRNQNNQGGNWLG. Residues 882-891 show a composition bias toward basic residues; the sequence is RNRNQRGHHK. Residues 895–910 show a composition bias toward low complexity; that stretch reads DRQQQQQQQVQTIDEE.

It belongs to the eIF-3 subunit C family. Component of the eukaryotic translation initiation factor 3 (eIF-3) complex. The eIF-3 complex interacts with pix.

The protein localises to the cytoplasm. Component of the eukaryotic translation initiation factor 3 (eIF-3) complex, which is involved in protein synthesis of a specialized repertoire of mRNAs and, together with other initiation factors, stimulates binding of mRNA and methionyl-tRNAi to the 40S ribosome. The eIF-3 complex specifically targets and initiates translation of a subset of mRNAs involved in cell proliferation. In Drosophila sechellia (Fruit fly), this protein is Eukaryotic translation initiation factor 3 subunit C.